The sequence spans 254 residues: uncharacterized protein (254 aa).

One can recognise an S4 RNA-binding domain in the interval 14–81 (IRLQKVLSQA…DSLVYLALNK (68 aa)). The Nucleophile role is filled by aspartate 119.

It belongs to the pseudouridine synthase RsuA family.

The enzyme catalyses a uridine in RNA = a pseudouridine in RNA. This is an uncharacterized protein from Mycobacterium bovis (strain ATCC BAA-935 / AF2122/97).